The following is a 577-amino-acid chain: Outer spore wall assembly protein SHE10 (577 aa).

Positions 1 to 23 (MGKLIKLITTLTVLVSLLQYCCE) are cleaved as a signal peptide. Coiled coils occupy residues 379–416 (NETR…ENVE) and 513–561 (ILRS…EEDV). Residues 525 to 545 (RERKERERKEREKAAAEEFQR) show a composition bias toward basic and acidic residues. The disordered stretch occupies residues 525–577 (RERKERERKEREKAAAEEFQRQQELLRQQEEEDEEDVSYTSTSTITTTTTMTL). The span at 562–577 (SYTSTSTITTTTTMTL) shows a compositional bias: low complexity.

It belongs to the SHE10 family. Component of the mitochondria-localized RNase mitochondrial RNA-processing (RNase MRP) composed of one single RNA encoded by the NME1 gene and at least 31 proteins. Absent in the nucleus-localized RNase MRP (NuMRP).

It localises to the mitochondrion. Involved in spore wall assembly. May be a component of the mitochondrial RNase MRP (MtMRP), a ribonucleoprotein endoribonuclease involved in the cleaving RNA transcripts to generate primers for DNA replication in mitochondria. This is Outer spore wall assembly protein SHE10 from Saccharomyces cerevisiae (strain YJM789) (Baker's yeast).